A 372-amino-acid polypeptide reads, in one-letter code: Saccharopine dehydrogenase [NAD(+), L-lysine-forming] (372 aa).

Residues Arg-18 and Lys-77 each contribute to the L-saccharopine site. Lys-77 acts as the Proton acceptor in catalysis. His-95 serves as the catalytic Proton donor. Gln-100 provides a ligand contact to L-saccharopine. Arg-129 is an NAD(+) binding site. L-saccharopine contacts are provided by Arg-130 and Phe-134. NAD(+) is bound by residues 200–201 (GR), Asp-224, Thr-228, Tyr-248, and Val-275. A disulfide bridge connects residues Cys-202 and Cys-246. 276 to 278 (SAD) contacts L-saccharopine. 316–319 (IDHL) serves as a coordination point for NAD(+).

The protein belongs to the AlaDH/PNT family. In terms of assembly, monomer.

It carries out the reaction L-saccharopine + NAD(+) + H2O = L-lysine + 2-oxoglutarate + NADH + H(+). The protein operates within amino-acid biosynthesis; L-lysine biosynthesis via AAA pathway; L-lysine from L-alpha-aminoadipate (fungal route): step 3/3. Functionally, catalyzes the NAD(+)-dependent cleavage of saccharopine to L-lysine and 2-oxoglutarate, the final step in the alpha-aminoadipate (AAA) pathway for lysin biosynthesis. This chain is Saccharopine dehydrogenase [NAD(+), L-lysine-forming] (lys-4), found in Neurospora crassa (strain ATCC 24698 / 74-OR23-1A / CBS 708.71 / DSM 1257 / FGSC 987).